Here is a 175-residue protein sequence, read N- to C-terminus: Phosphatidylglycerol/phosphatidylinositol transfer protein (175 aa).

The signal sequence occupies residues 1-21 (MKFLSTAAALLVCLAPVSTTA). The propeptide occupies 22–37 (RSLDFFKSSQSPIQAQ).

It belongs to the NPC2 family. In terms of assembly, monomer.

Its subcellular location is the cytoplasm. The protein localises to the cytoplasmic vesicle. The protein resides in the golgi apparatus. Functionally, catalyzes the intermembrane transfer of phosphatidylglycerol and phosphatidylinositol. This is Phosphatidylglycerol/phosphatidylinositol transfer protein (pltp) from Aspergillus oryzae (strain ATCC 42149 / RIB 40) (Yellow koji mold).